Consider the following 188-residue polypeptide: Probable nicotinate-nucleotide adenylyltransferase (188 aa).

This sequence belongs to the NadD family.

It catalyses the reaction nicotinate beta-D-ribonucleotide + ATP + H(+) = deamido-NAD(+) + diphosphate. The protein operates within cofactor biosynthesis; NAD(+) biosynthesis; deamido-NAD(+) from nicotinate D-ribonucleotide: step 1/1. Catalyzes the reversible adenylation of nicotinate mononucleotide (NaMN) to nicotinic acid adenine dinucleotide (NaAD). The polypeptide is Probable nicotinate-nucleotide adenylyltransferase (Sulfurovum sp. (strain NBC37-1)).